The sequence spans 380 residues: Methylthioribose-1-phosphate isomerase (380 aa).

Asp-257 (proton donor) is an active-site residue.

This sequence belongs to the eIF-2B alpha/beta/delta subunits family. MtnA subfamily.

It is found in the cytoplasm. The protein resides in the nucleus. It catalyses the reaction 5-(methylsulfanyl)-alpha-D-ribose 1-phosphate = 5-(methylsulfanyl)-D-ribulose 1-phosphate. The protein operates within amino-acid biosynthesis; L-methionine biosynthesis via salvage pathway; L-methionine from S-methyl-5-thio-alpha-D-ribose 1-phosphate: step 1/6. Catalyzes the interconversion of methylthioribose-1-phosphate (MTR-1-P) into methylthioribulose-1-phosphate (MTRu-1-P). The protein is Methylthioribose-1-phosphate isomerase of Naegleria gruberi (Amoeba).